We begin with the raw amino-acid sequence, 142 residues long: Ribosome maturation factor RimP (142 aa).

This sequence belongs to the RimP family.

Its subcellular location is the cytoplasm. Required for maturation of 30S ribosomal subunits. The sequence is that of Ribosome maturation factor RimP from Nitrosospira multiformis (strain ATCC 25196 / NCIMB 11849 / C 71).